The sequence spans 316 residues: Beta-ketoacyl-[acyl-carrier-protein] synthase III (316 aa).

Active-site residues include Cys112 and His243. The ACP-binding stretch occupies residues 244 to 248 (QANIR). The active site involves Asn273.

The protein belongs to the thiolase-like superfamily. FabH family. Homodimer.

The protein localises to the cytoplasm. It catalyses the reaction malonyl-[ACP] + acetyl-CoA + H(+) = 3-oxobutanoyl-[ACP] + CO2 + CoA. It functions in the pathway lipid metabolism; fatty acid biosynthesis. Catalyzes the condensation reaction of fatty acid synthesis by the addition to an acyl acceptor of two carbons from malonyl-ACP. Catalyzes the first condensation reaction which initiates fatty acid synthesis and may therefore play a role in governing the total rate of fatty acid production. Possesses both acetoacetyl-ACP synthase and acetyl transacylase activities. Its substrate specificity determines the biosynthesis of branched-chain and/or straight-chain of fatty acids. The chain is Beta-ketoacyl-[acyl-carrier-protein] synthase III from Actinobacillus pleuropneumoniae serotype 5b (strain L20).